Consider the following 477-residue polypeptide: Bifunctional protein HldE (477 aa).

Residues 1–318 (MQIQLPMFQN…RRAVQQEQGA (318 aa)) form a ribokinase region. 195–198 (NLSE) contacts ATP. Residue aspartate 264 is part of the active site. The segment at 344-477 (FTNGCFDIIH…VEKIRKDQVK (134 aa)) is cytidylyltransferase.

In the N-terminal section; belongs to the carbohydrate kinase PfkB family. It in the C-terminal section; belongs to the cytidylyltransferase family. In terms of assembly, homodimer.

The catalysed reaction is D-glycero-beta-D-manno-heptose 7-phosphate + ATP = D-glycero-beta-D-manno-heptose 1,7-bisphosphate + ADP + H(+). It carries out the reaction D-glycero-beta-D-manno-heptose 1-phosphate + ATP + H(+) = ADP-D-glycero-beta-D-manno-heptose + diphosphate. Its pathway is nucleotide-sugar biosynthesis; ADP-L-glycero-beta-D-manno-heptose biosynthesis; ADP-L-glycero-beta-D-manno-heptose from D-glycero-beta-D-manno-heptose 7-phosphate: step 1/4. The protein operates within nucleotide-sugar biosynthesis; ADP-L-glycero-beta-D-manno-heptose biosynthesis; ADP-L-glycero-beta-D-manno-heptose from D-glycero-beta-D-manno-heptose 7-phosphate: step 3/4. In terms of biological role, catalyzes the phosphorylation of D-glycero-D-manno-heptose 7-phosphate at the C-1 position to selectively form D-glycero-beta-D-manno-heptose-1,7-bisphosphate. Its function is as follows. Catalyzes the ADP transfer from ATP to D-glycero-beta-D-manno-heptose 1-phosphate, yielding ADP-D-glycero-beta-D-manno-heptose. This Hahella chejuensis (strain KCTC 2396) protein is Bifunctional protein HldE.